The chain runs to 809 residues: Transitional endoplasmic reticulum ATPase homolog 1 (809 aa).

A disordered region spans residues 1–21; that stretch reads MASVPTHQSEKEKKNDELSTA. The span at 8-21 shows a compositional bias: basic and acidic residues; that stretch reads QSEKEKKNDELSTA. Residues 253–259, Asn354, His390, and 527–532 each bind ATP; these read PGTGKTL and GCGKTL. A disordered region spans residues 779 to 809; the sequence is FGNNFKFPGEQRGSDAPSAPVPAQDDDDLYN. Positions 803–809 are interaction with ufd-2; it reads DDDDLYN.

The protein belongs to the AAA ATPase family. CDC48 subfamily. As to quaternary structure, homohexamer; oligomerization is ATP-independent. Forms a ring-shaped particle of 18.3 nm diameter, that displays 6-fold radial symmetry. Interacts with cdc-48.2 and thus may form heterohexamers. Forms a complex composed of cdc-48.1, him-6 and crp-1; within the complex, interacts with helicase him-6 and GTPase crp-1. Forms a complex composed of deubiquitinating enzyme atx-3, adapter ubxn-5 and cdc-48.1; within the complex, interacts (via N-terminus) with ubxn-5 and with atx-3. Forms a complex composed of deubiquitinating enzyme atx-3, E4 ubiquitin-protein ligase ufd-2 and cdc-48.1; within the complex, interacts with atx-3 and (via DDDLYN motif) with ufd-2. Interacts (via N-terminus) with atx-3 (via RRDR motif); the interaction is not required for atx-3 enzymatic activity. Forms a complex composed of cdc-48.1, myosin chaperone unc-45, ubiquitin-protein ligases ufd-2 and chn-1; within the complex, interacts (via DDDLYN motif) with ufd-2 and targets myosin chaperone unc-45 for proteasomal degradation. Forms a complex composed of ubxn-3, ufd-1, npl-4.1 and cdc-48.1; within the complex, interacts (via N-terminus) with ubxn-3 (via FPK motif) and with ufd-1. Forms a complex composed of ubxn-3, cdc-48.1 and/or cdc-48.2 and substrate cdt-1. Interacts (via N-terminus) with ubxn-1. Interacts (via N-terminus) with ubxn-2. Interacts (via N-terminus) with ubxn-4. Interacts with ubxn-6. Interacts with ufd-3. Does not interact with air-2. In terms of tissue distribution, expressed in germ cells and spermatheca. Expressed in body wall muscles.

The protein resides in the cytoplasm. The protein localises to the perinuclear region. It catalyses the reaction ATP + H2O = ADP + phosphate + H(+). Its activity is regulated as follows. The first ATP-binding region has low ATPase activity. The second ATP-binding region is responsible for ATPase activity. ATP binding to the first ATP-binding region induces intrinsic activity of the second ATP-binding region. While ATP binding to the first ATP-binding region appears to prevent ATP hydrolysis by the second ATP-binding region, ADP-binding to first region promotes the coordinate and cooperative ATPase cycle of the second ATP-binding region. ATP binding to the first ATP-binding region induces a conformational change, promoting the rotation of the first ATP-binding region relative to the second ATP-binding region in the hexamer. Inhibited by N-ethylmaleimide (NEM). ATP-dependent chaperone which probably uses the energy provided by ATP hydrolysis to generate mechanical force to unfold substrate proteins, disassemble protein complexes, and disaggregate protein aggregates. Can also prevent aggregation of unfolded proteins also in an ATP-independent manner. Targets polyubiquitinated proteins for proteasomal degradation by binding to 'Lys-48'-linked polyubiquitin chains. Involved in the cytoplasmic elimination of misfolded proteins exported from the ER. This pathway, known as ERAD, prevents the activation of the unfolded protein response (UPR) caused by the accumulation of misfolded proteins in the ER. In association with helicase him-6 and GTPase crp-1, regulates the unfolded protein response (UPR) following ER stress, probably independently of the ERAD pathway. Together with udf-2 and chn-1, regulates myosin assembly in body wall muscles by targeting myosin chaperone unc-45 for proteasomal degradation. Together with the ufd-1-npl-4 complex, controls the switch from spermatogenesis to oogenesis by regulating E3 ligase cul-2 complex-mediated tra-1 proteasomal degradation. During oocyte meiosis and together with cdc-48.2, required for chromosome condensation at the diakinesis phase in prophase I and for progression of metaphase I. During the first embryonic cell division, regulates DNA replication and thus chromosome segregation and decondensation, and nuclear envelope re-assembly. In S phase and in association with ufd-1, npl-4.1 and/or npl-4.2 and ubxn-3, ensures the degradation of DNA licensing factor cdt-1 after the initiation of DNA replication and thus the disassembly of the DNA replication CMG helicase complex by promoting the dissociation from chromatin of several of its components including cdc-45 and sld-5. Regulates ubxn-3 nuclear localization during S phase. During the first embryonic cell divisions and together with cdc-48.2, regulates the re-assembly of the nuclear envelope after mitosis possibly by inactivating kinase air-2, a component of the chromosomal passenger complex (CPC). However, in another study, cdc-48.1 does not appear to be implicated in the regulation of air-2. This Caenorhabditis elegans protein is Transitional endoplasmic reticulum ATPase homolog 1.